A 154-amino-acid polypeptide reads, in one-letter code: UPF0178 protein H16_B0290 (154 aa).

The protein belongs to the UPF0178 family.

In Cupriavidus necator (strain ATCC 17699 / DSM 428 / KCTC 22496 / NCIMB 10442 / H16 / Stanier 337) (Ralstonia eutropha), this protein is UPF0178 protein H16_B0290.